The chain runs to 333 residues: Transaldolase NQM1 (333 aa).

Lys144 serves as the catalytic Schiff-base intermediate with substrate.

This sequence belongs to the transaldolase family. Type 1 subfamily. As to quaternary structure, homodimer.

It carries out the reaction D-sedoheptulose 7-phosphate + D-glyceraldehyde 3-phosphate = D-erythrose 4-phosphate + beta-D-fructose 6-phosphate. The protein operates within carbohydrate degradation; pentose phosphate pathway; D-glyceraldehyde 3-phosphate and beta-D-fructose 6-phosphate from D-ribose 5-phosphate and D-xylulose 5-phosphate (non-oxidative stage): step 2/3. Transaldolase is important for the balance of metabolites in the pentose-phosphate pathway. The polypeptide is Transaldolase NQM1 (NQM1) (Saccharomyces cerevisiae (strain ATCC 204508 / S288c) (Baker's yeast)).